A 240-amino-acid chain; its full sequence is Ribonuclease HII (240 aa).

Residues 21–210 (GLVAGVDEAG…VAAAVQRTVV (190 aa)) form the RNase H type-2 domain. The a divalent metal cation site is built by Asp-27, Glu-28, and Asp-119.

This sequence belongs to the RNase HII family. It depends on Mn(2+) as a cofactor. Mg(2+) is required as a cofactor.

The protein resides in the cytoplasm. The enzyme catalyses Endonucleolytic cleavage to 5'-phosphomonoester.. Its function is as follows. Endonuclease that specifically degrades the RNA of RNA-DNA hybrids. This is Ribonuclease HII from Paracidovorax citrulli (strain AAC00-1) (Acidovorax citrulli).